Consider the following 449-residue polypeptide: Exodeoxyribonuclease 7 large subunit (449 aa).

This sequence belongs to the XseA family. As to quaternary structure, heterooligomer composed of large and small subunits.

Its subcellular location is the cytoplasm. It catalyses the reaction Exonucleolytic cleavage in either 5'- to 3'- or 3'- to 5'-direction to yield nucleoside 5'-phosphates.. Bidirectionally degrades single-stranded DNA into large acid-insoluble oligonucleotides, which are then degraded further into small acid-soluble oligonucleotides. In Aliivibrio fischeri (strain MJ11) (Vibrio fischeri), this protein is Exodeoxyribonuclease 7 large subunit.